A 658-amino-acid polypeptide reads, in one-letter code: Zinc finger protein 135 (658 aa).

One can recognise a KRAB domain in the interval 14–85; it reads VTFEDVVVGF…ESRLPQGVYP (72 aa). A disordered region spans residues 171–196; sequence LNPDLPHQPMTPERQSPHTWGTRGKR. C2H2-type zinc fingers lie at residues 214–236, 242–264, 270–292, 298–320, 326–348, 354–376, 382–404, 410–432, 438–460, 466–488, 494–516, 522–544, 550–572, 578–600, 606–628, and 634–656; these read YKCQ…HRTH, YECH…QRIH, YKCT…QRTH, YECS…ERTH, YECS…LRIH, YQCG…QRIH, YECH…QRTH, YECG…RRIH, YGCN…ERTH, YECS…QRIH, YECN…QRIH, YECH…RRIH, and YACR…QRTH.

The protein belongs to the krueppel C2H2-type zinc-finger protein family.

Its subcellular location is the nucleus. Functionally, plays a role in the regulation of cell morphology and cytoskeletal organization. May be involved in transcriptional regulation. This chain is Zinc finger protein 135 (ZNF135), found in Homo sapiens (Human).